Reading from the N-terminus, the 285-residue chain is Protease HtpX homolog (285 aa).

2 helical membrane passes run 7–27 and 30–50; these read TAMLMAAITALFIVIGGMIGG and GMTIALLFALGMNFFSYWFSD. Residue H131 participates in Zn(2+) binding. Residue E132 is part of the active site. H135 contributes to the Zn(2+) binding site. 2 consecutive transmembrane segments (helical) span residues 146-166 and 177-197; these read ITATMAGAISALANFAMFFGG and IAGIAVALLAPIAGALIQMAI. Residue E202 participates in Zn(2+) binding.

It belongs to the peptidase M48B family. Requires Zn(2+) as cofactor.

It is found in the cell inner membrane. The sequence is that of Protease HtpX homolog from Burkholderia cenocepacia (strain HI2424).